The sequence spans 309 residues: Mitochondrial import receptor subunit TOM34 (309 aa).

At serine 8 the chain carries Phosphoserine. TPR repeat units follow at residues 9-42, 51-84, and 85-118; these read VEQL…LQAR, SVLY…VPFS, and IKPL…DNSV. Residues 158 to 189 form a disordered region; sequence WNSLPSDNHKETAKTKSKEATATKSRVPSAGD. Residue serine 160 is modified to Phosphoserine. Residues 164–178 show a composition bias toward basic and acidic residues; that stretch reads DNHKETAKTKSKEAT. Serine 186 bears the Phosphoserine mark. 3 TPR repeats span residues 193-226, 227-260, and 261-294; these read AKAL…SSLE, SATY…DGKN, and VKAF…EPRN. Lysine 197 is covalently cross-linked (Glycyl lysine isopeptide (Lys-Gly) (interchain with G-Cter in SUMO2)).

Belongs to the Tom34 family. In terms of assembly, interacts with HSP90A, VCP, ATP6V1D, KIAA0665, AMPK, and DMAP1 through its TPR repeat. Isoform 1 is ubiquitously expressed while isoform 2 is expressed only in mature testicular germ cells. Isoform 1 is expressed in all testicular cells. Isoform 2 is highly expressed in early to late pachytene cells but expression is significantly decreased in round spermatid cells.

It localises to the cytoplasm. The protein resides in the mitochondrion outer membrane. Functionally, plays a role in the import of cytosolically synthesized preproteins into mitochondria. Binds the mature portion of precursor proteins. Interacts with cellular components, and possesses weak ATPase activity. May be a chaperone-like protein that helps to keep newly synthesized precursors in an unfolded import compatible state. The sequence is that of Mitochondrial import receptor subunit TOM34 (Tomm34) from Mus musculus (Mouse).